A 204-amino-acid chain; its full sequence is Probable carboxysome shell protein CsoS1E (204 aa).

3 stretches are compositionally biased toward low complexity: residues 1–14, 41–84, and 92–102; these read MPKP…DSPS, SAST…AAGS, and GGAIKPPASSS. Residues 1 to 102 are disordered; the sequence is MPKPSSSSSS…GAIKPPASSS (102 aa). The BMC domain occupies 111-196; it reads ALGMIETRGM…PHQEVEPALR (86 aa).

This sequence belongs to the bacterial microcompartments protein family. Homohexamer.

It localises to the carboxysome. A probable carboxysomal shell protein found only in Prochlorococcus and Synechococcus strains that grow in low light. This Prochlorococcus marinus (strain MIT 9313) protein is Probable carboxysome shell protein CsoS1E.